Here is a 266-residue protein sequence, read N- to C-terminus: Undecaprenyl-diphosphatase (266 aa).

A run of 8 helical transmembrane segments spans residues 1–21 (METF…FLPI), 39–59 (QGFS…VIYF), 87–107 (WWII…KDFI), 111–131 (LRNT…LWWA), 149–169 (ALLI…RSGA), 183–203 (AAAK…AILV), 218–238 (ALGI…YYFL), and 246–266 (MTPF…LILW).

It belongs to the UppP family.

Its subcellular location is the cell inner membrane. The enzyme catalyses di-trans,octa-cis-undecaprenyl diphosphate + H2O = di-trans,octa-cis-undecaprenyl phosphate + phosphate + H(+). Catalyzes the dephosphorylation of undecaprenyl diphosphate (UPP). Confers resistance to bacitracin. The sequence is that of Undecaprenyl-diphosphatase from Shewanella denitrificans (strain OS217 / ATCC BAA-1090 / DSM 15013).